A 94-amino-acid polypeptide reads, in one-letter code: Exodeoxyribonuclease 7 small subunit (94 aa).

The protein belongs to the XseB family. In terms of assembly, heterooligomer composed of large and small subunits.

It localises to the cytoplasm. The enzyme catalyses Exonucleolytic cleavage in either 5'- to 3'- or 3'- to 5'-direction to yield nucleoside 5'-phosphates.. Bidirectionally degrades single-stranded DNA into large acid-insoluble oligonucleotides, which are then degraded further into small acid-soluble oligonucleotides. In Trichormus variabilis (strain ATCC 29413 / PCC 7937) (Anabaena variabilis), this protein is Exodeoxyribonuclease 7 small subunit.